The following is a 37-amino-acid chain: Calcitonin gene-related peptide (37 aa).

A disulfide bridge links cysteine 2 with cysteine 7. At phenylalanine 37 the chain carries Phenylalanine amide.

The protein belongs to the calcitonin family.

Its function is as follows. CGRP induces vasodilation. It dilates a variety of vessels including the coronary, cerebral and systemic vasculature. Its abundance in the CNS also points toward a neurotransmitter or neuromodulator role. The sequence is that of Calcitonin gene-related peptide from Pelophylax ridibundus (Marsh frog).